The following is a 50-amino-acid chain: Small ribosomal subunit protein uS14 (50 aa).

Cys15, Cys18, Cys33, and Cys36 together coordinate Zn(2+).

The protein belongs to the universal ribosomal protein uS14 family. Zinc-binding uS14 subfamily. As to quaternary structure, part of the 30S ribosomal subunit. Zn(2+) serves as cofactor.

Its function is as follows. Binds 16S rRNA, required for the assembly of 30S particles. The sequence is that of Small ribosomal subunit protein uS14 from Methanosarcina mazei (strain ATCC BAA-159 / DSM 3647 / Goe1 / Go1 / JCM 11833 / OCM 88) (Methanosarcina frisia).